A 137-amino-acid chain; its full sequence is Large ribosomal subunit protein uL16 (137 aa).

A compositionally biased stretch (basic residues) spans 1–21; it reads MLSPKKVKFRKRQKGRLKGKA. Residues 1–22 form a disordered region; it reads MLSPKKVKFRKRQKGRLKGKAQ.

Belongs to the universal ribosomal protein uL16 family. In terms of assembly, part of the 50S ribosomal subunit.

In terms of biological role, binds 23S rRNA and is also seen to make contacts with the A and possibly P site tRNAs. The sequence is that of Large ribosomal subunit protein uL16 from Maridesulfovibrio salexigens (strain ATCC 14822 / DSM 2638 / NCIMB 8403 / VKM B-1763) (Desulfovibrio salexigens).